Reading from the N-terminus, the 539-residue chain is Netrin-G1 (539 aa).

An N-terminal signal peptide occupies residues 1–18 (MYLSRFLSIHALWVTVSS). 3 disulfide bridges follow: Cys33-Cys50, Cys72-Cys92, and Cys80-Cys88. Residues 46-296 (DYTACQPEST…AISDIKVRGR (251 aa)) enclose the Laminin N-terminal domain. The NGL discriminant loop I stretch occupies residues 80-91 (CAMGNPYMCNNE). Asn133 carries an N-linked (GlcNAc...) asparagine glycan. Residues Cys182 and Cys206 are joined by a disulfide bond. The NGL discriminant loop II stretch occupies residues 208 to 214 (EEYSTGY). The segment at 273–275 (EIF) is NGL discriminant loop III. Intrachain disulfides connect Cys297/Cys306, Cys299/Cys315, Cys317/Cys326, Cys329/Cys354, Cys364/Cys373, Cys366/Cys384, Cys387/Cys396, Cys399/Cys417, Cys420/Cys432, Cys422/Cys438, Cys440/Cys449, Cys452/Cys462, and Cys488/Cys497. Laminin EGF-like domains follow at residues 297–356 (CKCN…TCIP), 364–419 (CECF…VCIE), and 420–469 (CYCN…VCDN). N-linked (GlcNAc...) asparagine glycosylation is present at Asn320. A glycan (N-linked (GlcNAc...) asparagine) is linked at Asn406. Asn433 is a glycosylation site (N-linked (GlcNAc...) asparagine). Ser510 carries GPI-anchor amidated serine lipidation. Positions 511-539 (ESGQGAPPRGSPALLLLTMLLGTAGPLVF) are cleaved as a propeptide — removed in mature form.

In terms of processing, N-glycosylated. As to expression, expression is restricted primarily to neurons of the CNS, particularly in the dorsal thalamus, olfactory bulb and inferior colliculus. Isoform 1A and isoform 1D are the major products in adult brain.

The protein resides in the cell membrane. Involved in controlling patterning and neuronal circuit formation at the laminar, cellular, subcellular and synaptic levels. Promotes neurite outgrowth of both axons and dendrites. The chain is Netrin-G1 (Ntng1) from Mus musculus (Mouse).